Reading from the N-terminus, the 122-residue chain is Small ribosomal subunit protein uS13 (122 aa).

The tract at residues 95–122 (GLPVRGQRTHTNARTRKGPAKPIAGKKK) is disordered.

The protein belongs to the universal ribosomal protein uS13 family. Part of the 30S ribosomal subunit. Forms a loose heterodimer with protein S19. Forms two bridges to the 50S subunit in the 70S ribosome.

Located at the top of the head of the 30S subunit, it contacts several helices of the 16S rRNA. In the 70S ribosome it contacts the 23S rRNA (bridge B1a) and protein L5 of the 50S subunit (bridge B1b), connecting the 2 subunits; these bridges are implicated in subunit movement. Contacts the tRNAs in the A and P-sites. The protein is Small ribosomal subunit protein uS13 of Xanthobacter autotrophicus (strain ATCC BAA-1158 / Py2).